We begin with the raw amino-acid sequence, 355 residues long: Elongation factor Ts (355 aa).

The segment at 82–85 (TDFV) is involved in Mg(2+) ion dislocation from EF-Tu.

The protein belongs to the EF-Ts family.

The protein resides in the cytoplasm. In terms of biological role, associates with the EF-Tu.GDP complex and induces the exchange of GDP to GTP. It remains bound to the aminoacyl-tRNA.EF-Tu.GTP complex up to the GTP hydrolysis stage on the ribosome. This chain is Elongation factor Ts, found in Helicobacter acinonychis (strain Sheeba).